A 1050-amino-acid polypeptide reads, in one-letter code: MPIDSDDNVFDDDDDFIELLQDSSNQTSNVTNEIATDSTNSTNTRLVVPNNRLLEEIPVPKRILLGPTHHKIDYGNLDKYVYPSNFEVRDYQFNIVQRAFYHNLLVALPTGLGKTFIASTVMLNFLRWFPESKMIFVAPTKPLVAQQIKACCSITGIPSSKVAILLDKTRKNRGEIWDEKQVFFTTPQVVENDLASGLVDPKTIALLVIDEAHRAKGNYAYNNIVKFMDRFTNSYRILALTATPASDVDGVQEIIDNLNISKVEVRSEESIDIIKYMKRKRIIRRNIYQSDEIKECIDLLCTAIAPVLKVANGKGILEITDPSRINFFQCMDASRKIVANPTIPEGTKWSNFFTLQLLGVVGQCFRRLNVYGLRSFFSYFNEKYTEFMAKHSKKKSSNKLNADFYFSEPIKQLMKRIRTMIDDPKVFSHPKIEAMMEELDEFFTINNATDSKVIIFTEFRESALEIVRFIEKVGKNLKPHIFIGQAKERDKFDESNFGKKSKGKRVGKKQQDDSKSSSENAQINGMNQKLQKEIIKNFKQGTYNILVATSIGEEGLDIGEVDLIICYDSTSSPIKNIQRMGRTGRKRDGKVVLLFSSNEESKFDKAMNGYEYIQQHIMKGQLIDLKEQNRMIPKDWEPKVEMRFIEIPEENHELQVVDDEDEIIRIATQYMMGGKSKKKKAAASKKGKTKEKRAKQFFMPDNVEIGFRSVTSMVRAVGSSKSLEEEKKEEKVRDVLDRIVDSDSDEEIPLGSIPIPRSEVIAHKQSTTDEQLLERDCQSGSNISDRTLDQHHSASEERGINSNFSHESNLPTPPENSPPKRKSIVLEEARIAKKKHKKSLGIRKPTIRPPSIIDQLKKQKSKIIRPDSANETICLDEDDILLPEYTNITEKEVTVQEDRREIEHDDDSEIFDDGLDEQLAMIDDMNTTKSFVEPTRIDFKDEVFKNDFDEHEGFLNNDELMELHTSYFTAIDPMDKVFYYDPSSSVHVDGANREYAFYGKIGHSKRSQVLIGLQKRAHEMAAKSKQSKTATPSEPETFQNYLDSDFIALQ.

A Helicase ATP-binding domain is found at 95 to 262 (IVQRAFYHNL…EIIDNLNISK (168 aa)). Residue 108–115 (LPTGLGKT) participates in ATP binding. A DEAH box motif is present at residues 210–213 (DEAH). The Helicase C-terminal domain maps to 431–631 (KIEAMMEELD…LIDLKEQNRM (201 aa)). Disordered regions lie at residues 493-524 (DESNFGKKSKGKRVGKKQQDDSKSSSENAQIN) and 743-821 (DSDE…PPKR). Residues 499 to 508 (KKSKGKRVGK) are compositionally biased toward basic residues. The span at 786-799 (RTLDQHHSASEERG) shows a compositional bias: basic and acidic residues. Residues 800-810 (INSNFSHESNL) are compositionally biased toward polar residues.

This sequence belongs to the DEAD box helicase family. DEAH subfamily. FANCM sub-subfamily. As to quaternary structure, interacts with the MHF histone-fold complex to form the FANCM-MHF complex.

Its subcellular location is the nucleus. It catalyses the reaction ATP + H2O = ADP + phosphate + H(+). Its function is as follows. ATP-dependent DNA helicase involved in DNA damage repair by homologous recombination and in genome maintenance. Capable of unwinding D-loops. Plays a role in limiting crossover recombinants during mitotic DNA double-strand break (DSB) repair. Component of a FANCM-MHF complex which promotes gene conversion at blocked replication forks, probably by reversal of the stalled fork. This is ATP-dependent DNA helicase MPH1 from Scheffersomyces stipitis (strain ATCC 58785 / CBS 6054 / NBRC 10063 / NRRL Y-11545) (Yeast).